A 592-amino-acid polypeptide reads, in one-letter code: Multidrug transporter AQR1 (592 aa).

Positions 1–77 (MVESGPHSIN…EISSTHSQDA (77 aa)) are disordered. The helical transmembrane segment at 99–119 (WCMVALLTACGFWSSLGSPIY) threads the bilayer. The N-linked (GlcNAc...) asparagine glycan is linked to Asn-138. A run of 5 helical transmembrane segments spans residues 139-159 (ITVV…GGLA), 166-186 (PVLL…ACAP), 188-208 (YGVI…SIAI), 231-251 (GFVL…AAAW), and 255-275 (AIFW…FALL). An N-linked (GlcNAc...) asparagine glycan is attached at Asn-285. The next 6 membrane-spanning stretches (helical) occupy residues 340-360 (IFLS…MLSA), 374-394 (LTII…GSFA), 432-452 (LQSV…FGWS), 459-479 (IPSI…TLSA), 497-517 (SCFN…FAKM), and 523-543 (VGGT…LMFI).

Belongs to the major facilitator superfamily. CAR1 family.

It localises to the cell membrane. Multidrug transporter acts as a determinant of resistance to acetic acid, flucytosine and clotrimazole, these 3 compounds acting synergistically against the pathogen. Reduces the intracellular accumulation of the antifungal agents flucytosine and, to a moderate extent, of clotrimazole. Its role in acetic acid resistance may be indirect, presumably through the transport of a still unidentified physiological substrate. The sequence is that of Multidrug transporter AQR1 from Candida glabrata (strain ATCC 2001 / BCRC 20586 / JCM 3761 / NBRC 0622 / NRRL Y-65 / CBS 138) (Yeast).